The chain runs to 183 residues: uncharacterized protein (183 aa).

The protein belongs to the EUO family.

This is an uncharacterized protein from Chlamydia trachomatis serovar D (strain ATCC VR-885 / DSM 19411 / UW-3/Cx).